A 211-amino-acid chain; its full sequence is Small ribosomal subunit protein uS3 (211 aa).

The KH type-2 domain occupies 38-106 (LRKFIKKAFY…NIELNIIEVK (69 aa)).

It belongs to the universal ribosomal protein uS3 family. Part of the 30S ribosomal subunit. Forms a tight complex with proteins S10 and S14.

In terms of biological role, binds the lower part of the 30S subunit head. Binds mRNA in the 70S ribosome, positioning it for translation. This chain is Small ribosomal subunit protein uS3, found in Ehrlichia canis (strain Jake).